A 659-amino-acid chain; its full sequence is Pseudouridylate synthase 7 homolog (659 aa).

Met1 carries the post-translational modification N-acetylmethionine. Polar residues-rich tracts occupy residues Met1–Ser10 and Cys39–Ser54. Residues Met1–Phe99 are disordered. Ser10 carries the phosphoserine modification. Over residues Pro75–Ser98 the composition is skewed to acidic residues. Ser125 is modified (phosphoserine). Catalysis depends on Asp292, which acts as the Nucleophile. The TRUD domain occupies Gly368 to Arg578.

The protein belongs to the pseudouridine synthase TruD family. Interacts with SIRT1.

The protein resides in the nucleus. The catalysed reaction is a uridine in tRNA = a pseudouridine in tRNA. It carries out the reaction uridine(13) in tRNA = pseudouridine(13) in tRNA. It catalyses the reaction a uridine in mRNA = a pseudouridine in mRNA. In terms of biological role, pseudouridylate synthase that catalyzes pseudouridylation of RNAs. Acts as a regulator of protein synthesis in embryonic stem cells by mediating pseudouridylation of RNA fragments derived from tRNAs (tRFs): pseudouridylated tRFs inhibit translation by targeting the translation initiation complex. Also catalyzes pseudouridylation of mRNAs: mediates pseudouridylation of mRNAs with the consensus sequence 5'-UGUAG-3'. Acts as a regulator of pre-mRNA splicing by mediating pseudouridylation of pre-mRNAs at locations associated with alternatively spliced regions. Pseudouridylation of pre-mRNAs near splice sites directly regulates mRNA splicing and mRNA 3'-end processing. In addition to mRNAs and tRNAs, binds other types of RNAs, such as snRNAs, Y RNAs and vault RNAs, suggesting that it can catalyze pseudouridylation of many RNA types. The polypeptide is Pseudouridylate synthase 7 homolog (Bos taurus (Bovine)).